Consider the following 413-residue polypeptide: MPSSISWGLLLLAGLSCLVAGSLAEDAQETGASKHDQEHPASHRIAPNLAEFALSLYRVLAHESNTTNIFFSPVSIAMALASLSLGTKADTHTQIMEGLGFNLTETAESDIHQGFQHLLQTLNKPNSQLQLTTGNGLFIDHNLKLLDKFLQDVKNLYHSEAFSTDFTNTEEAKKQINTYVEKGTQGKIVDLVKDLNRDSVLALVNYIFFKGKWEKPFEVDHTKEEDFHVDQVTTVRVPMMNRMGMFEVHYCSTLASWVLQMDYLGNATAIFLLPDEGKLQHLEDTITKEILAKFLKNRESSSVNLHFPKLNISGTMDLKPVLTRLGITNVFSYKADLSGITEDDPLRVSQALHKAVLTIDERGTEAAGATFLEMMPMSLPPEVKFDKPFLVVIIEHSTKSPLFVGKVVNPTLH.

Residues 1 to 24 (MPSSISWGLLLLAGLSCLVAGSLA) form the signal peptide. N-linked (GlcNAc...) asparagine glycosylation is found at N65, N102, and N266. An RCL region spans residues 368-387 (GATFLEMMPMSLPPEVKFDK).

It belongs to the serpin family.

Its subcellular location is the secreted. Inhibitor of serine proteases. Its primary target is elastase, but it also has a moderate affinity for plasmin and thrombin. This is Alpha-1-antitrypsin-like protein GS55-MS from Ictidomys tridecemlineatus (Thirteen-lined ground squirrel).